Here is a 401-residue protein sequence, read N- to C-terminus: Tyrosine--tRNA ligase (401 aa).

Residues 45 to 54 (PTAPDLHLGH) carry the 'HIGH' region motif. The 'KMSKS' region signature appears at 230 to 234 (KMSKS). An ATP-binding site is contributed by K233. Residues 339–399 (IWLAKALVEC…GKRKFAKLKV (61 aa)) form the S4 RNA-binding domain.

The protein belongs to the class-I aminoacyl-tRNA synthetase family. TyrS type 2 subfamily. In terms of assembly, homodimer.

It is found in the cytoplasm. It catalyses the reaction tRNA(Tyr) + L-tyrosine + ATP = L-tyrosyl-tRNA(Tyr) + AMP + diphosphate + H(+). In terms of biological role, catalyzes the attachment of tyrosine to tRNA(Tyr) in a two-step reaction: tyrosine is first activated by ATP to form Tyr-AMP and then transferred to the acceptor end of tRNA(Tyr). This chain is Tyrosine--tRNA ligase, found in Campylobacter jejuni subsp. jejuni serotype O:2 (strain ATCC 700819 / NCTC 11168).